We begin with the raw amino-acid sequence, 282 residues long: Aquaporin PIP2-7 (282 aa).

The tract at residues 1–21 (MSKEVSVEGEQPPVKDYTDPP) is disordered. Topologically, residues 1–38 (MSKEVSVEGEQPPVKDYTDPPPEPLLNFGELRLWSFYR) are cytoplasmic. Residues 39–59 (ALIAEFVATLLFLYVTIATVI) traverse the membrane as a helical segment. At 60–71 (GHKEQNAADQCS) the chain is on the extracellular side. Residues 72 to 92 (GVGLLGIAWAFGGMIFILVYC) form a helical membrane-spanning segment. The Cytoplasmic segment spans residues 93 to 120 (TAGISGGHINPAVTLGLFLARKVSLIRA). Residues 102-104 (NPA) carry the NPA 1 motif. The chain crosses the membrane as a helical span at residues 121 to 141 (LLYMVAQCLGAIVGVGIVKGI). The Extracellular segment spans residues 142–162 (MKHQYNSLGGGANVVAAGYSK). The chain crosses the membrane as a helical span at residues 163-183 (GTALGAEIIGTFVLVYTVFSA). The Cytoplasmic portion of the chain corresponds to 184–196 (TDPKRSARDSHVP). The chain crosses the membrane as a helical span at residues 197-217 (VLAPLPIGFAVFMVHLATIPI). Residues 218–244 (TGTGINPARSLGAAVIYNQDKPWDDHW) are Extracellular-facing. The NPA 2 signature appears at 223–225 (NPA). A helical transmembrane segment spans residues 245–265 (ILWVGPFVGALAAAAYHQYIL). Residues 266-282 (RAAAIKALGSFRSNPSN) lie on the Cytoplasmic side of the membrane.

This sequence belongs to the MIP/aquaporin (TC 1.A.8) family. PIP (TC 1.A.8.11) subfamily. In terms of tissue distribution, expressed in roots, leaves and fruits.

The protein localises to the cell membrane. Functionally, water channel required to facilitate the transport of water across cell membrane; mercury-insensitive. Contributes to the tolerance to multiple abiotic stresses including salt (NaCl), cold and water deprivation, by modulating cytosolic K(+)/Na(+) ratio, maintaining osmotic balance, and reducing membrane injury (e.g. oxidative injury). Also regulates the expression of abscisic acid (ABA)- biosynthetic and -responsive genes during dehydration and salt stresses. This Musa acuminata (Banana) protein is Aquaporin PIP2-7.